Reading from the N-terminus, the 319-residue chain is Multivesicular body subunit 12B (319 aa).

The tract at residues 1-50 (MRSCFCVRRSRDPPPPQPPPPPPQRGTDQSTMPEVKDLSEALPETSMDPI) is disordered. Over residues 13–24 (PPPPQPPPPPPQ) the composition is skewed to pro residues. A phosphoserine mark is found at serine 46 and serine 101. The MABP domain occupies 47–193 (MDPITGVGVV…SMGIWYRMGR (147 aa)). Phosphothreonine occurs at positions 122, 204, and 205. Positions 195–222 (PRNHDSSQPTTPSQSSAASTPAPNLPRH) are disordered. Over residues 200 to 216 (SSQPTTPSQSSAASTPA) the composition is skewed to low complexity. Serine 224 carries the post-translational modification Phosphoserine. Residues 254–303 (MDGVPFMISEKFSCVPESMQPFDLLGITIKSLAEIEKEYEYSFRTEQSAA) enclose the UMA domain. The segment at 299-319 (EQSAAARLPPSPTRCQQIPQS) is disordered. Phosphoserine is present on serine 309.

This sequence belongs to the MVB12 family. As to quaternary structure, component of the ESCRT-I complex (endosomal sorting complex required for transport I) which consists of TSG101, VPS28, a VPS37 protein (VPS37A to -D) and MVB12A or MVB12B in a 1:1:1:1 stoichiometry. Interacts with TSG101; the association appears to be mediated by the TSG101-VPS37 binary subcomplex. Interacts with VPS28. Interacts with VPS37B; the association appears to be mediated by the TSG101-VPS37 binary subcomplex. Interacts with VPS37C; the association appears to be mediated by the TSG101-VPS37 binary subcomplex.

It localises to the endosome. Its subcellular location is the late endosome membrane. Component of the ESCRT-I complex, a regulator of vesicular trafficking process. Required for the sorting of endocytic ubiquitinated cargos into multivesicular bodies. The protein is Multivesicular body subunit 12B (MVB12B) of Homo sapiens (Human).